The chain runs to 346 residues: LRP2-binding protein (346 aa).

Residues 58–91 form a TPR repeat; the sequence is AMAYFLRGQLYFEEGWYEEALAQFEEIQEKDHQA. 6 Sel1-like repeats span residues 92 to 124, 132 to 167, 172 to 205, 206 to 241, 242 to 276, and 296 to 331; these read IYQL…DSSC, FAAA…DNGN, VKAQ…GNGS, LESQ…ERGN, VYAQ…EVHD, and AMAA…RLNP.

In terms of assembly, interacts with LRP2.

The protein localises to the cytoplasm. Functionally, may act as an adapter that regulates LRP2 function. This is LRP2-binding protein (Lrp2bp) from Mus musculus (Mouse).